A 300-amino-acid chain; its full sequence is Protease HtpX (300 aa).

Helical transmembrane passes span 4 to 24 (ILLF…TLRL) and 40 to 60 (SLLI…LFIS). His145 contacts Zn(2+). The active site involves Glu146. Residue His149 participates in Zn(2+) binding. 2 helical membrane passes run 153 to 173 (GDMV…MFFA) and 193 to 213 (LGFF…GLVA). Glu225 is a binding site for Zn(2+).

It belongs to the peptidase M48B family. Zn(2+) serves as cofactor.

It is found in the cell inner membrane. The polypeptide is Protease HtpX (Chromohalobacter salexigens (strain ATCC BAA-138 / DSM 3043 / CIP 106854 / NCIMB 13768 / 1H11)).